The following is a 1070-amino-acid chain: DNA-directed RNA polymerase subunit beta (1070 aa).

Belongs to the RNA polymerase beta chain family. As to quaternary structure, in plastids the minimal PEP RNA polymerase catalytic core is composed of four subunits: alpha, beta, beta', and beta''. When a (nuclear-encoded) sigma factor is associated with the core the holoenzyme is formed, which can initiate transcription.

It is found in the plastid. The catalysed reaction is RNA(n) + a ribonucleoside 5'-triphosphate = RNA(n+1) + diphosphate. In terms of biological role, DNA-dependent RNA polymerase catalyzes the transcription of DNA into RNA using the four ribonucleoside triphosphates as substrates. This is DNA-directed RNA polymerase subunit beta (rpoB) from Cuscuta reflexa (Southern Asian dodder).